We begin with the raw amino-acid sequence, 159 residues long: Capsid protein (159 aa).

This sequence belongs to the virgaviridae capsid protein family.

The protein resides in the virion. In terms of biological role, capsid protein self-assembles to form rod-shaped virions about 18 nm in diameter with a central canal enclosing the viral genomic RNA. The sequence is that of Capsid protein (CP) from Tomato mosaic virus (strain Kazakh K1) (ToMV).